The primary structure comprises 245 residues: Octopine transport system permease protein OccM (245 aa).

The next 5 helical transmembrane spans lie at 12–32 (FVAL…SVAL), 57–77 (FYIF…IYYG), 96–116 (AYWC…AEIM), 163–183 (ILMV…ITGI), and 204–224 (IYLI…WALW). An ABC transmembrane type-1 domain is found at 19–216 (IPLALQLAVF…ILNFIVARLF (198 aa)).

The protein belongs to the binding-protein-dependent transport system permease family. HisMQ subfamily.

It is found in the cell inner membrane. Functionally, component of the octopine active transport system probably consisting of four subunits: Q, M, P and T. The sequence is that of Octopine transport system permease protein OccM (occM) from Rhizobium radiobacter (Agrobacterium tumefaciens).